The chain runs to 154 residues: Hydroperoxy fatty acid reductase Gpx2 (154 aa).

C34 is a catalytic residue.

The protein belongs to the glutathione peroxidase family. In terms of assembly, monomer.

It carries out the reaction a hydroperoxy polyunsaturated fatty acid + NADPH + H(+) = a hydroxy polyunsaturated fatty acid + NADP(+) + H2O. Mercaptosuccinate, pCMB, and nethylmaleimide act as inhibitors of the catalytic activity. In terms of biological role, hydroperoxy fatty acid reductase essential for the removal of lipid hydroperoxides under normal and stress conditions, leading to the protection of membrane integrity. This is Hydroperoxy fatty acid reductase Gpx2 (gpx2) from Synechocystis sp. (strain ATCC 27184 / PCC 6803 / Kazusa).